The following is a 293-amino-acid chain: Iron-sulfur cluster transfer protein Nubpl (293 aa).

The interval Cys214–Cys217 is CXXC motif probably involved in coordinating iron-sulfur cluster binding.

This sequence belongs to the Mrp/NBP35 ATP-binding proteins family. As to quaternary structure, homodimer; dimerization is not reliant on iron-sulfur cluster binding. [4Fe-4S] cluster serves as cofactor.

It is found in the mitochondrion membrane. Its function is as follows. Iron-sulfur cluster transfer protein involved in the assembly of the mitochondrial membrane respiratory chain NADH dehydrogenase (Complex I). May deliver one or more Fe-S clusters to complex I subunits. Alleviates pausing in mitochondrial DNA (mtDNA) replication at slow zone 2. May be involved in mtDNA-helicase-mediated mtDNA unwinding and replication by transferring iron-sulfur clusters. This chain is Iron-sulfur cluster transfer protein Nubpl, found in Drosophila melanogaster (Fruit fly).